Consider the following 337-residue polypeptide: MASEVLLELQPSNRSLQAPANITSCESALEDWDLLYRVLPGFVITICFFGLLGNLLVLSFFLLPWRQWWWQQRQRQQRLTIAEIYLANLAASDLVFVLGLPFWAENIGNRFNWPFGTDLCRVVSGVIKANLFVSIFLVVAISQDRYRLLVYPMTSWGYRRRRQAQATCLLIWVAGGLLSIPTFLLRSVKVVPDLNVSACILLFPHEAWHFARMVELNVLGFLLPVTAIIFFNYHILASLRGQKEASRTRCGGPKGSKTTGLILTLVASFLVCWCPYHFFAFLDFLVQVRVIQDCSWKEITDLGLQLANFFAFVNSCLNPLIYVFAGRLLKTRVLGTL.

At 1–41 (MASEVLLELQPSNRSLQAPANITSCESALEDWDLLYRVLPG) the chain is on the extracellular side. Residues Asn13 and Asn21 are each glycosylated (N-linked (GlcNAc...) asparagine). A helical membrane pass occupies residues 42 to 62 (FVITICFFGLLGNLLVLSFFL). Residues 63–83 (LPWRQWWWQQRQRQQRLTIAE) lie on the Cytoplasmic side of the membrane. The chain crosses the membrane as a helical span at residues 84–104 (IYLANLAASDLVFVLGLPFWA). The Extracellular portion of the chain corresponds to 105–121 (ENIGNRFNWPFGTDLCR). Residues Cys120 and Cys199 are joined by a disulfide bond. Residues 122-142 (VVSGVIKANLFVSIFLVVAIS) traverse the membrane as a helical segment. At 143-164 (QDRYRLLVYPMTSWGYRRRRQA) the chain is on the cytoplasmic side. The chain crosses the membrane as a helical span at residues 165–185 (QATCLLIWVAGGLLSIPTFLL). Residues 186 to 217 (RSVKVVPDLNVSACILLFPHEAWHFARMVELN) are Extracellular-facing. Asn195 carries N-linked (GlcNAc...) asparagine glycosylation. The helical transmembrane segment at 218-238 (VLGFLLPVTAIIFFNYHILAS) threads the bilayer. The Cytoplasmic portion of the chain corresponds to 239-261 (LRGQKEASRTRCGGPKGSKTTGL). The helical transmembrane segment at 262-282 (ILTLVASFLVCWCPYHFFAFL) threads the bilayer. Residues 283-305 (DFLVQVRVIQDCSWKEITDLGLQ) lie on the Extracellular side of the membrane. The helical transmembrane segment at 306 to 326 (LANFFAFVNSCLNPLIYVFAG) threads the bilayer. Residues 327–337 (RLLKTRVLGTL) lie on the Cytoplasmic side of the membrane.

This sequence belongs to the G-protein coupled receptor 1 family. Bradykinin receptor subfamily. BDKRB1 sub-subfamily. In terms of tissue distribution, expressed in bladder, lung, duodenum, kidney, uterus, thymus, salivary gland, testis, prostate, macrophages, aorta, spleen and heart.

The protein localises to the cell membrane. In terms of biological role, this is a receptor for bradykinin. Could be a factor in chronic pain and inflammation. The chain is B1 bradykinin receptor (Bdkrb1) from Rattus norvegicus (Rat).